The primary structure comprises 422 residues: Proline--tRNA ligase (422 aa).

The protein belongs to the class-II aminoacyl-tRNA synthetase family. ProS type 2 subfamily. In terms of assembly, homodimer.

The protein resides in the cytoplasm. The catalysed reaction is tRNA(Pro) + L-proline + ATP = L-prolyl-tRNA(Pro) + AMP + diphosphate. Functionally, catalyzes the attachment of proline to tRNA(Pro) in a two-step reaction: proline is first activated by ATP to form Pro-AMP and then transferred to the acceptor end of tRNA(Pro). This is Proline--tRNA ligase from Wolbachia pipientis wMel.